A 229-amino-acid chain; its full sequence is Potassium/proton antiporter CemA (229 aa).

Transmembrane regions (helical) follow at residues 7–27, 106–126, and 193–213; these read LTPFPYLASIVFLPWGISLSF, LILHFSTNIICFTILSAYSIL, and LVSTFPVIIDTILKYWIFLFL.

The protein belongs to the CemA family.

Its subcellular location is the plastid. It is found in the chloroplast inner membrane. It catalyses the reaction K(+)(in) + H(+)(out) = K(+)(out) + H(+)(in). Its function is as follows. Contributes to K(+)/H(+) antiport activity by supporting proton efflux to control proton extrusion and homeostasis in chloroplasts in a light-dependent manner to modulate photosynthesis. Prevents excessive induction of non-photochemical quenching (NPQ) under continuous-light conditions. Indirectly promotes efficient inorganic carbon uptake into chloroplasts. This Illicium oligandrum (Star anise) protein is Potassium/proton antiporter CemA.